We begin with the raw amino-acid sequence, 121 residues long: Chronic lymphocytic leukemia up-regulated protein 1 (121 aa).

As to expression, specifically expressed in chronic lymphocytic leukemia (CLL) cells from patients without immunoglobulin heavy-chain hypermutations. Expression is detected in all CLL cells and levels are similar in patients before and after treatment.

The protein resides in the cytoplasm. The chain is Chronic lymphocytic leukemia up-regulated protein 1 (CLLU1) from Homo sapiens (Human).